The following is a 242-amino-acid chain: Large ribosomal subunit protein uL1 (242 aa).

It belongs to the universal ribosomal protein uL1 family. In terms of assembly, part of the 50S ribosomal subunit.

Its function is as follows. Binds directly to 23S rRNA. The L1 stalk is quite mobile in the ribosome, and is involved in E site tRNA release. Protein L1 is also a translational repressor protein, it controls the translation of the L11 operon by binding to its mRNA. The sequence is that of Large ribosomal subunit protein uL1 from Dictyoglomus thermophilum (strain ATCC 35947 / DSM 3960 / H-6-12).